The primary structure comprises 307 residues: Ubiquitin recognition factor in ER-associated degradation protein 1 (307 aa).

At methionine 1 the chain carries N-acetylmethionine. A phosphoserine mark is found at serine 129, serine 231, serine 245, serine 247, and serine 299. Disordered regions lie at residues 231 to 256 and 288 to 307; these read SGNR…DIKR and GRFV…GRKP.

This sequence belongs to the UFD1 family. In terms of assembly, heterodimer with NPLOC4, this heterodimer binds VCP and inhibits Golgi membrane fusion. Interacts with USP13. Interacts with ZFAND2B; probably through VCP. Found in adult heart, skeletal muscle and pancreas, and in fetal liver and kidney.

It localises to the nucleus. Its subcellular location is the cytoplasm. It is found in the cytosol. The protein operates within protein degradation; proteasomal ubiquitin-dependent pathway. Its function is as follows. Essential component of the ubiquitin-dependent proteolytic pathway which degrades ubiquitin fusion proteins. The ternary complex containing UFD1, VCP and NPLOC4 binds ubiquitinated proteins and is necessary for the export of misfolded proteins from the ER to the cytoplasm, where they are degraded by the proteasome. The NPLOC4-UFD1-VCP complex regulates spindle disassembly at the end of mitosis and is necessary for the formation of a closed nuclear envelope. It may be involved in the development of some ectoderm-derived structures. Acts as a negative regulator of type I interferon production via the complex formed with VCP and NPLOC4, which binds to RIGI and recruits RNF125 to promote ubiquitination and degradation of RIGI. This Homo sapiens (Human) protein is Ubiquitin recognition factor in ER-associated degradation protein 1.